Here is a 350-residue protein sequence, read N- to C-terminus: Protein XRP2 (350 aa).

Residues 1 to 10 (MGCFFSKRRK) show a composition bias toward basic residues. The tract at residues 1–31 (MGCFFSKRRKADKESRPENEEERPKQYSWDQ) is disordered. The N-myristoyl glycine moiety is linked to residue glycine 2. Cysteine 3 carries S-palmitoyl cysteine lipidation. Positions 11–31 (ADKESRPENEEERPKQYSWDQ) are enriched in basic and acidic residues. Residues 24-179 (PKQYSWDQRE…TWSNIHDFTP (156 aa)) enclose the C-CAP/cofactor C-like domain. Residues 98 to 99 (GS) and 115 to 118 (QQFR) each bind GTP.

Belongs to the TBCC family. As to quaternary structure, found in a complex with ARL3, RP2 and UNC119 (or UNC119B); RP2 induces hydrolysis of GTP ARL3 in the complex, leading to the release of UNC119 (or UNC119B). Interacts with ARL3; interaction is direct and stimulated with the activated GTP-bound form of ARL3. Post-translationally, myristoylated on Gly-2; which may be required for membrane targeting. Palmitoylated on Cys-3; which may be required for plasma membrane targeting. Mutation of Cys-3 targets the protein to internal membranes. As to expression, ubiquitous. Expressed in the rod and cone photoreceptors, extending from the tips of the outer segment (OS) through the inner segment (IS) and outer nuclear layer (ONL) and into the synaptic terminals of the outer plexiform layer (ONL). Also detected in the bipolar, horizontal and amacrine cells in the inner nuclear layer (INL), extending to the inner plexiform layer (IPL) and though the ganglion cell layer (GCL) and into the nerve fiber layer (NFL) (at protein level).

It localises to the cell membrane. It is found in the cell projection. The protein localises to the cilium. Functionally, acts as a GTPase-activating protein (GAP) involved in trafficking between the Golgi and the ciliary membrane. Involved in localization of proteins, such as NPHP3, to the cilium membrane by inducing hydrolysis of GTP ARL3, leading to the release of UNC119 (or UNC119B). Acts as a GTPase-activating protein (GAP) for tubulin in concert with tubulin-specific chaperone C, but does not enhance tubulin heterodimerization. Acts as a guanine nucleotide dissociation inhibitor towards ADP-ribosylation factor-like proteins. This Homo sapiens (Human) protein is Protein XRP2 (RP2).